The sequence spans 74 residues: uncharacterized protein (74 aa).

The segment at 39–74 (SSPQAPGTLKPRALVRPSPGPVQENHLSEAQFPPKL) is disordered.

This is an uncharacterized protein from Homo sapiens (Human).